We begin with the raw amino-acid sequence, 220 residues long: Uracil-DNA glycosylase (220 aa).

Catalysis depends on Asp65, which acts as the Proton acceptor.

It belongs to the uracil-DNA glycosylase (UDG) superfamily. UNG family.

The protein localises to the cytoplasm. It carries out the reaction Hydrolyzes single-stranded DNA or mismatched double-stranded DNA and polynucleotides, releasing free uracil.. In terms of biological role, excises uracil residues from the DNA which can arise as a result of misincorporation of dUMP residues by DNA polymerase or due to deamination of cytosine. The sequence is that of Uracil-DNA glycosylase from Phocaeicola vulgatus (strain ATCC 8482 / DSM 1447 / JCM 5826 / CCUG 4940 / NBRC 14291 / NCTC 11154) (Bacteroides vulgatus).